A 503-amino-acid chain; its full sequence is Cysteine desulfurase, mitochondrial (503 aa).

Residues 1–27 constitute a mitochondrion transit peptide; that stretch reads MSNIAPQVLRHASRACSRRLSLSASLV. The span at 34–50 shows a compositional bias: low complexity; sequence RTVTGSGSGGRRYVSGS. The segment at 34-58 is disordered; that stretch reads RTVTGSGSGGRRYVSGSQRHNAQAQ. Pyridoxal 5'-phosphate contacts are provided by residues 172-173, N254, Q282, and 302-304; these read AT and SGH. Residue K305 is modified to N6-(pyridoxal phosphate)lysine. Position 342 (T342) interacts with pyridoxal 5'-phosphate. C427 acts as the Cysteine persulfide intermediate in catalysis. A [2Fe-2S] cluster-binding site is contributed by C427.

Belongs to the class-V pyridoxal-phosphate-dependent aminotransferase family. NifS/IscS subfamily. Pyridoxal 5'-phosphate serves as cofactor.

The protein resides in the mitochondrion. It carries out the reaction (sulfur carrier)-H + L-cysteine = (sulfur carrier)-SH + L-alanine. Its function is as follows. Catalyzes the removal of elemental sulfur from cysteine to produce alanine. It supplies the inorganic sulfur for iron-sulfur (Fe-S) clusters. Plays a role in both tRNA-processing and mitochondrial metabolism. Involved in the 2-thio-modification of both 5-carboxymethylaminomethyl-2-thiouridine in mitochondrial tRNAs and 5-methoxycarbonylmethyl-2-thiouridine (mcm5s2U) in cytoplasmic tRNAs. The protein is Cysteine desulfurase, mitochondrial of Arthroderma benhamiae (strain ATCC MYA-4681 / CBS 112371) (Trichophyton mentagrophytes).